The sequence spans 556 residues: uncharacterized protein (556 aa).

Disordered regions lie at residues 1 to 40 (MSNS…TNEN), 80 to 243 (NTTQ…KQSW), 278 to 324 (YDSD…SSLP), 363 to 391 (RTKQ…KFVD), and 422 to 525 (DSKQ…ENSA). Residues 7 to 25 (NNNNNTNNNNNNNNNNNGN) are compositionally biased toward low complexity. The segment covering 30–40 (EEPDDDSTNEN) has biased composition (acidic residues). Composition is skewed to low complexity over residues 80-133 (NTTQ…GTRS) and 164-181 (NDNN…NDSN). Positions 182-192 (IVDDDEDEEEF) are enriched in acidic residues. A compositionally biased stretch (low complexity) spans 207–226 (STSSPSSTSSPIVSPQTQTS). A compositionally biased stretch (polar residues) spans 227 to 243 (KLESSMDVSPSSGKQSW). Low complexity-rich tracts occupy residues 292-322 (NNSS…NSSS), 369-388 (KVQQ…NNNK), and 425-525 (QQNV…ENSA). Residues 528–548 (GSFIKNAVIFIFILLLMVVGF) traverse the membrane as a helical segment.

The protein resides in the membrane. This is an uncharacterized protein from Dictyostelium discoideum (Social amoeba).